We begin with the raw amino-acid sequence, 189 residues long: Crossover junction endodeoxyribonuclease RuvC (189 aa).

Catalysis depends on residues Asp12, Glu72, and Asp147. Mg(2+) contacts are provided by Asp12, Glu72, and Asp147.

This sequence belongs to the RuvC family. As to quaternary structure, homodimer which binds Holliday junction (HJ) DNA. The HJ becomes 2-fold symmetrical on binding to RuvC with unstacked arms; it has a different conformation from HJ DNA in complex with RuvA. In the full resolvosome a probable DNA-RuvA(4)-RuvB(12)-RuvC(2) complex forms which resolves the HJ. It depends on Mg(2+) as a cofactor.

The protein localises to the cytoplasm. The enzyme catalyses Endonucleolytic cleavage at a junction such as a reciprocal single-stranded crossover between two homologous DNA duplexes (Holliday junction).. In terms of biological role, the RuvA-RuvB-RuvC complex processes Holliday junction (HJ) DNA during genetic recombination and DNA repair. Endonuclease that resolves HJ intermediates. Cleaves cruciform DNA by making single-stranded nicks across the HJ at symmetrical positions within the homologous arms, yielding a 5'-phosphate and a 3'-hydroxyl group; requires a central core of homology in the junction. The consensus cleavage sequence is 5'-(A/T)TT(C/G)-3'. Cleavage occurs on the 3'-side of the TT dinucleotide at the point of strand exchange. HJ branch migration catalyzed by RuvA-RuvB allows RuvC to scan DNA until it finds its consensus sequence, where it cleaves and resolves the cruciform DNA. This is Crossover junction endodeoxyribonuclease RuvC from Porphyromonas gingivalis (strain ATCC BAA-308 / W83).